The following is a 95-amino-acid chain: Co-chaperonin GroES (95 aa).

The protein belongs to the GroES chaperonin family. In terms of assembly, heptamer of 7 subunits arranged in a ring. Interacts with the chaperonin GroEL.

It localises to the cytoplasm. In terms of biological role, together with the chaperonin GroEL, plays an essential role in assisting protein folding. The GroEL-GroES system forms a nano-cage that allows encapsulation of the non-native substrate proteins and provides a physical environment optimized to promote and accelerate protein folding. GroES binds to the apical surface of the GroEL ring, thereby capping the opening of the GroEL channel. In Bordetella petrii (strain ATCC BAA-461 / DSM 12804 / CCUG 43448), this protein is Co-chaperonin GroES.